A 264-amino-acid chain; its full sequence is Probable membrane transporter protein HI_0902 (264 aa).

9 helical membrane passes run 4 to 24 (FILL…LFGI), 28 to 48 (LVIV…ESLL), 49 to 69 (MSTA…GSAQ), 81 to 101 (AVRI…LFIG), 107 to 127 (ISAK…VLSI), 147 to 167 (ILIG…IVPF), 183 to 203 (AFCG…SGWG), 210 to 230 (YSLG…SFFT), and 243 to 263 (VSTL…NMFL).

This sequence belongs to the 4-toluene sulfonate uptake permease (TSUP) (TC 2.A.102) family.

It localises to the cell membrane. This Haemophilus influenzae (strain ATCC 51907 / DSM 11121 / KW20 / Rd) protein is Probable membrane transporter protein HI_0902.